Reading from the N-terminus, the 91-residue chain is DNA-directed RNA polymerase subunit Rpo5 (91 aa).

It belongs to the archaeal Rpo5/eukaryotic RPB5 RNA polymerase subunit family. Part of the RNA polymerase complex.

The protein localises to the cytoplasm. It catalyses the reaction RNA(n) + a ribonucleoside 5'-triphosphate = RNA(n+1) + diphosphate. Its function is as follows. DNA-dependent RNA polymerase (RNAP) catalyzes the transcription of DNA into RNA using the four ribonucleoside triphosphates as substrates. This Staphylothermus marinus (strain ATCC 43588 / DSM 3639 / JCM 9404 / F1) protein is DNA-directed RNA polymerase subunit Rpo5.